The following is a 420-amino-acid chain: 3-phosphoshikimate 1-carboxyvinyltransferase (420 aa).

3-phosphoshikimate-binding residues include Lys26, Ser27, and Arg31. Lys26 lines the phosphoenolpyruvate pocket. Residues Gly97 and Arg125 each coordinate phosphoenolpyruvate. 6 residues coordinate 3-phosphoshikimate: Ser170, Ser171, Gln172, Asp297, Asn320, and Lys324. Gln172 is a binding site for phosphoenolpyruvate. Catalysis depends on Asp297, which acts as the Proton acceptor. Phosphoenolpyruvate-binding residues include Arg328, Arg375, and Lys400.

It belongs to the EPSP synthase family. Monomer.

It localises to the cytoplasm. It carries out the reaction 3-phosphoshikimate + phosphoenolpyruvate = 5-O-(1-carboxyvinyl)-3-phosphoshikimate + phosphate. Its pathway is metabolic intermediate biosynthesis; chorismate biosynthesis; chorismate from D-erythrose 4-phosphate and phosphoenolpyruvate: step 6/7. Catalyzes the transfer of the enolpyruvyl moiety of phosphoenolpyruvate (PEP) to the 5-hydroxyl of shikimate-3-phosphate (S3P) to produce enolpyruvyl shikimate-3-phosphate and inorganic phosphate. The sequence is that of 3-phosphoshikimate 1-carboxyvinyltransferase from Rhizobium leguminosarum bv. trifolii (strain WSM2304).